A 688-amino-acid chain; its full sequence is Elongation factor G (688 aa).

One can recognise a tr-type G domain in the interval 6 to 280; it reads KLFRNFGIMA…AVVDFLPSPI (275 aa). Residues 15–22, 79–83, and 133–136 each bind GTP; these read AHIDAGKT, DTPGH, and NKMD.

It belongs to the TRAFAC class translation factor GTPase superfamily. Classic translation factor GTPase family. EF-G/EF-2 subfamily.

It localises to the cytoplasm. Catalyzes the GTP-dependent ribosomal translocation step during translation elongation. During this step, the ribosome changes from the pre-translocational (PRE) to the post-translocational (POST) state as the newly formed A-site-bound peptidyl-tRNA and P-site-bound deacylated tRNA move to the P and E sites, respectively. Catalyzes the coordinated movement of the two tRNA molecules, the mRNA and conformational changes in the ribosome. The chain is Elongation factor G from Ureaplasma urealyticum serovar 10 (strain ATCC 33699 / Western).